We begin with the raw amino-acid sequence, 395 residues long: Acid ceramidase (395 aa).

An N-terminal signal peptide occupies residues 1–21 (MLGRSRLTFVLLSVTVTCSVA). A disulfide bridge connects residues Cys-31 and Cys-340. Cys-143 (nucleophile) is an active-site residue. 4 N-linked (GlcNAc...) asparagine glycosylation sites follow: Asn-173, Asn-259, Asn-342, and Asn-348. Cys-388 and Cys-392 form a disulfide bridge.

The protein belongs to the acid ceramidase family. Heterodimer; disulfide-linked. The heterodimer is composed of the disulfide-linked alpha and beta chains produced by autocatalytic cleavage of the precursor. In terms of processing, N-glycosylated. Proteolytically cleaved into two chains alpha and beta that remain associated via a disulfide bond. Cleavage gives rise to a conformation change that activates the enzyme. The same catalytic Cys residue mediates the autoproteolytic cleavage and subsequent hydrolysis of lipid substrates. The beta chain may undergo an additional C-terminal processing.

The protein localises to the lysosome. Its subcellular location is the secreted. The enzyme catalyses an N-acylsphing-4-enine + H2O = sphing-4-enine + a fatty acid. It catalyses the reaction N-dodecanoylsphing-4-enine + H2O = dodecanoate + sphing-4-enine. It carries out the reaction N-tetradecanoylsphing-4-enine + H2O = tetradecanoate + sphing-4-enine. The catalysed reaction is N-hexadecanoylsphing-4-enine + H2O = sphing-4-enine + hexadecanoate. The enzyme catalyses N-octadecanoylsphing-4-enine + H2O = sphing-4-enine + octadecanoate. It catalyses the reaction N-dodecanoyl-(4R)-hydroxysphinganine + H2O = (4R)-hydroxysphinganine + dodecanoate. It carries out the reaction N-(dodecanoyl)-sphinganine + H2O = dodecanoate + sphinganine. The catalysed reaction is N-(acetyl)-sphing-4-enine + H2O = sphing-4-enine + acetate. The enzyme catalyses N-(hexanoyl)sphing-4-enine + H2O = hexanoate + sphing-4-enine. It catalyses the reaction N-octanoylsphing-4-enine + H2O = octanoate + sphing-4-enine. It carries out the reaction N-(9Z-octadecenoyl)-sphing-4-enine + H2O = sphing-4-enine + (9Z)-octadecenoate. The catalysed reaction is N-dodecanoylethanolamine + H2O = dodecanoate + ethanolamine. It participates in lipid metabolism; sphingolipid metabolism. Its function is as follows. Lysosomal ceramidase that hydrolyzes sphingolipid ceramides into sphingosine and free fatty acids at acidic pH. Ceramides, sphingosine, and its phosphorylated form sphingosine-1-phosphate are bioactive lipids that mediate cellular signaling pathways regulating several biological processes including cell proliferation, apoptosis and differentiation. Has a higher catalytic efficiency towards C12-ceramides versus other ceramides. Also catalyzes the reverse reaction allowing the synthesis of ceramides from fatty acids and sphingosine. For the reverse synthetic reaction, the natural sphingosine D-erythro isomer is more efficiently utilized as a substrate compared to D-erythro-dihydrosphingosine and D-erythro-phytosphingosine, while the fatty acids with chain lengths of 12 or 14 carbons are the most efficiently used. Also has an N-acylethanolamine hydrolase activity. By regulating the levels of ceramides, sphingosine and sphingosine-1-phosphate in the epidermis, mediates the calcium-induced differentiation of epidermal keratinocytes. Also indirectly regulates tumor necrosis factor/TNF-induced apoptosis. By regulating the intracellular balance between ceramides and sphingosine, in adrenocortical cells, probably also acts as a regulator of steroidogenesis. This is Acid ceramidase from Balaenoptera acutorostrata scammoni (North Pacific minke whale).